Consider the following 253-residue polypeptide: uncharacterized protein (253 aa).

This is an uncharacterized protein from Mycobacterium bovis (strain ATCC BAA-935 / AF2122/97).